A 328-amino-acid polypeptide reads, in one-letter code: tRNA uridine(34) hydroxylase (328 aa).

The 95-residue stretch at 130–224 folds into the Rhodanese domain; sequence LDEDTVVLDT…YGKDPEVQGE (95 aa). Catalysis depends on cysteine 184, which acts as the Cysteine persulfide intermediate.

The protein belongs to the TrhO family.

It catalyses the reaction uridine(34) in tRNA + AH2 + O2 = 5-hydroxyuridine(34) in tRNA + A + H2O. Functionally, catalyzes oxygen-dependent 5-hydroxyuridine (ho5U) modification at position 34 in tRNAs. The sequence is that of tRNA uridine(34) hydroxylase from Streptococcus gordonii (strain Challis / ATCC 35105 / BCRC 15272 / CH1 / DL1 / V288).